A 391-amino-acid chain; its full sequence is 8-amino-7-oxononanoate synthase (391 aa).

Residue 108–109 (GF) participates in pyridoxal 5'-phosphate binding. His133 contacts substrate. Ser180, His208, and Thr236 together coordinate pyridoxal 5'-phosphate. The residue at position 239 (Lys239) is an N6-(pyridoxal phosphate)lysine. A substrate-binding site is contributed by Thr353.

The protein belongs to the class-II pyridoxal-phosphate-dependent aminotransferase family. BioF subfamily. Homodimer. The cofactor is pyridoxal 5'-phosphate.

It carries out the reaction 6-carboxyhexanoyl-[ACP] + L-alanine + H(+) = (8S)-8-amino-7-oxononanoate + holo-[ACP] + CO2. Its pathway is cofactor biosynthesis; biotin biosynthesis. Its function is as follows. Catalyzes the decarboxylative condensation of pimeloyl-[acyl-carrier protein] and L-alanine to produce 8-amino-7-oxononanoate (AON), [acyl-carrier protein], and carbon dioxide. The chain is 8-amino-7-oxononanoate synthase from Thermosipho melanesiensis (strain DSM 12029 / CIP 104789 / BI429).